We begin with the raw amino-acid sequence, 676 residues long: Pentatricopeptide repeat-containing protein ATP4 homolog, chloroplastic (676 aa).

A chloroplast-targeting transit peptide spans 1–73 (MASPSSLLSW…NSPRAAGLAR (73 aa)). Residues 17–58 (LSFQPKNPSPSPATARVSVQDPPPPPSDANPSPGRSSNTSRY) are disordered. PPR repeat units lie at residues 148–182 (EVIL…GVQP), 183–217 (DNAT…GCSP), 218–252 (DMLT…KWQL), 253–287 (DPVI…GVKP), 288–322 (NLVV…EAVP), 323–353 (NKAT…MKDE), 358–388 (DVVL…MKAS), 396–430 (DSWS…GFKP), 431–465 (NIFI…GITP), and 532–566 (RMPY…GIYS). Positions 578-662 (LHLRGLSVGA…WFLTTSVAAR (85 aa)) constitute a Smr domain.

Belongs to the PPR family. P subfamily.

The protein resides in the plastid. It is found in the chloroplast. Involved in translation and accumulation of chloroplast ATP synthase subunits. This Oryza sativa subsp. japonica (Rice) protein is Pentatricopeptide repeat-containing protein ATP4 homolog, chloroplastic.